Reading from the N-terminus, the 294-residue chain is Basic endochitinase (294 aa).

The signal sequence occupies residues 1 to 24 (MNIKVSLLFILPIFLLLLTSKVKA). Residues 25-294 (GDIVVYWGQD…GYSSAIRGAV (270 aa)) form the GH18 domain. 2 disulfides stabilise this stretch: cysteine 44–cysteine 91 and cysteine 74–cysteine 81. Catalysis depends on glutamate 151, which acts as the Proton donor. Cysteine 182 and cysteine 211 form a disulfide bridge.

Belongs to the glycosyl hydrolase 18 family. Chitinase class II subfamily.

It catalyses the reaction Random endo-hydrolysis of N-acetyl-beta-D-glucosaminide (1-&gt;4)-beta-linkages in chitin and chitodextrins.. Functionally, this protein functions as a defense against chitin containing fungal pathogens. In Nicotiana tabacum (Common tobacco), this protein is Basic endochitinase.